Consider the following 505-residue polypeptide: Beta-glucosidase 3 (505 aa).

The first 22 residues, 1–22 (MAAAAAFFCALLFISVQHGVLG), serve as a signal peptide directing secretion. A beta-D-glucoside is bound by residues Gln-43 and His-143. Glu-189 (proton donor) is an active-site residue. Cys-208 and Cys-217 form a disulfide bridge. Residue Asn-221 is glycosylated (N-linked (GlcNAc...) asparagine). A beta-D-glucoside-binding residues include Tyr-333 and Glu-405. Glu-405 (nucleophile) is an active-site residue. Residues Asn-415 and Asn-436 are each glycosylated (N-linked (GlcNAc...) asparagine). A beta-D-glucoside is bound by residues Trp-450 and Tyr-466.

It belongs to the glycosyl hydrolase 1 family.

It carries out the reaction Hydrolysis of terminal, non-reducing beta-D-glucosyl residues with release of beta-D-glucose.. This chain is Beta-glucosidase 3 (BGLU3), found in Oryza sativa subsp. japonica (Rice).